Reading from the N-terminus, the 239-residue chain is tRNA (guanine-N(1)-)-methyltransferase (239 aa).

S-adenosyl-L-methionine is bound by residues Gly108 and 128–133 (VGNFIV).

This sequence belongs to the RNA methyltransferase TrmD family. In terms of assembly, homodimer.

The protein resides in the cytoplasm. It carries out the reaction guanosine(37) in tRNA + S-adenosyl-L-methionine = N(1)-methylguanosine(37) in tRNA + S-adenosyl-L-homocysteine + H(+). Functionally, specifically methylates guanosine-37 in various tRNAs. The protein is tRNA (guanine-N(1)-)-methyltransferase of Helicobacter hepaticus (strain ATCC 51449 / 3B1).